A 415-amino-acid polypeptide reads, in one-letter code: Gamma-glutamyl phosphate reductase (415 aa).

Belongs to the gamma-glutamyl phosphate reductase family.

Its subcellular location is the cytoplasm. The enzyme catalyses L-glutamate 5-semialdehyde + phosphate + NADP(+) = L-glutamyl 5-phosphate + NADPH + H(+). It participates in amino-acid biosynthesis; L-proline biosynthesis; L-glutamate 5-semialdehyde from L-glutamate: step 2/2. In terms of biological role, catalyzes the NADPH-dependent reduction of L-glutamate 5-phosphate into L-glutamate 5-semialdehyde and phosphate. The product spontaneously undergoes cyclization to form 1-pyrroline-5-carboxylate. The polypeptide is Gamma-glutamyl phosphate reductase (Bacillus cereus (strain ZK / E33L)).